The sequence spans 120 residues: Ribonuclease P protein component (120 aa).

This sequence belongs to the RnpA family. Consists of a catalytic RNA component (M1 or rnpB) and a protein subunit.

It catalyses the reaction Endonucleolytic cleavage of RNA, removing 5'-extranucleotides from tRNA precursor.. Its function is as follows. RNaseP catalyzes the removal of the 5'-leader sequence from pre-tRNA to produce the mature 5'-terminus. It can also cleave other RNA substrates such as 4.5S RNA. The protein component plays an auxiliary but essential role in vivo by binding to the 5'-leader sequence and broadening the substrate specificity of the ribozyme. This Rickettsia bellii (strain RML369-C) protein is Ribonuclease P protein component.